Consider the following 80-residue polypeptide: Exodeoxyribonuclease 7 small subunit (80 aa).

The disordered stretch occupies residues 60-80 (LIDSDGTEHNLDPNNASAPEE). Residues 61 to 70 (IDSDGTEHNL) show a composition bias toward basic and acidic residues. The segment covering 71 to 80 (DPNNASAPEE) has biased composition (polar residues).

It belongs to the XseB family. In terms of assembly, heterooligomer composed of large and small subunits.

It is found in the cytoplasm. The enzyme catalyses Exonucleolytic cleavage in either 5'- to 3'- or 3'- to 5'-direction to yield nucleoside 5'-phosphates.. In terms of biological role, bidirectionally degrades single-stranded DNA into large acid-insoluble oligonucleotides, which are then degraded further into small acid-soluble oligonucleotides. The protein is Exodeoxyribonuclease 7 small subunit of Lactobacillus acidophilus (strain ATCC 700396 / NCK56 / N2 / NCFM).